Here is a 211-residue protein sequence, read N- to C-terminus: Ribonuclease HII (211 aa).

The RNase H type-2 domain occupies 24 to 211 (QLIAGVDEVG…KPVKKALGLD (188 aa)). Asp-30, Glu-31, and Asp-122 together coordinate a divalent metal cation.

This sequence belongs to the RNase HII family. The cofactor is Mn(2+). Requires Mg(2+) as cofactor.

The protein localises to the cytoplasm. It catalyses the reaction Endonucleolytic cleavage to 5'-phosphomonoester.. Its function is as follows. Endonuclease that specifically degrades the RNA of RNA-DNA hybrids. The polypeptide is Ribonuclease HII (Vibrio parahaemolyticus serotype O3:K6 (strain RIMD 2210633)).